A 638-amino-acid chain; its full sequence is LIM domain kinase 2 (638 aa).

2 consecutive LIM zinc-binding domains span residues 12-63 and 72-124; these read CQGC…CHKD and CHGC…CGKC. The PDZ domain occupies 152–239; that stretch reads HISMPATTEG…TLQLLIEHDP (88 aa). Residues 280–304 form a disordered region; sequence RRRSLRRSNSISKSPGPSSPKEPLL. Over residues 286 to 304 the composition is skewed to low complexity; the sequence is RSNSISKSPGPSSPKEPLL. S293 and S298 each carry phosphoserine. Positions 331–608 constitute a Protein kinase domain; sequence LIHGEVLGKG…DFFEALSLYL (278 aa). ATP-binding positions include 337–345 and N360; that span reads LGKGFFGQA. The active site involves D451. The residue at position 505 (T505) is a Phosphothreonine; by ROCK1 and CDC42BP.

This sequence belongs to the protein kinase superfamily. TKL Ser/Thr protein kinase family. Binds ROCK1 and MARF1. Interacts with NISCH. Phosphorylated on serine and/or threonine residues by ROCK1.

It localises to the cytoplasm. It is found in the cytoskeleton. Its subcellular location is the spindle. The protein resides in the microtubule organizing center. The protein localises to the centrosome. The catalysed reaction is L-seryl-[protein] + ATP = O-phospho-L-seryl-[protein] + ADP + H(+). The enzyme catalyses L-threonyl-[protein] + ATP = O-phospho-L-threonyl-[protein] + ADP + H(+). Its function is as follows. Serine/threonine-protein kinase that plays an essential role in the regulation of actin filament dynamics. Acts downstream of several Rho family GTPase signal transduction pathways. Involved in astral microtubule organization and mitotic spindle orientation during early stages of mitosis by mediating phosphorylation of TPPP. Displays serine/threonine-specific phosphorylation of myelin basic protein and histone (MBP) in vitro. Suppresses ciliogenesis via multiple pathways; phosphorylation of CFL1, suppression of directional trafficking of ciliary vesicles to the ciliary base, and by facilitating YAP1 nuclear localization where it acts as a transcriptional corepressor of the TEAD4 target genes AURKA and PLK1. In Bos taurus (Bovine), this protein is LIM domain kinase 2 (LIMK2).